Here is a 102-residue protein sequence, read N- to C-terminus: Large ribosomal subunit protein bL21 (102 aa).

The protein belongs to the bacterial ribosomal protein bL21 family. Part of the 50S ribosomal subunit. Contacts protein L20.

Functionally, this protein binds to 23S rRNA in the presence of protein L20. The sequence is that of Large ribosomal subunit protein bL21 from Lactiplantibacillus plantarum (strain ATCC BAA-793 / NCIMB 8826 / WCFS1) (Lactobacillus plantarum).